A 951-amino-acid chain; its full sequence is Glycine dehydrogenase (decarboxylating) 1 (951 aa).

N6-(pyridoxal phosphate)lysine is present on lysine 703.

Belongs to the GcvP family. The glycine cleavage system is composed of four proteins: P, T, L and H. The cofactor is pyridoxal 5'-phosphate.

The catalysed reaction is N(6)-[(R)-lipoyl]-L-lysyl-[glycine-cleavage complex H protein] + glycine + H(+) = N(6)-[(R)-S(8)-aminomethyldihydrolipoyl]-L-lysyl-[glycine-cleavage complex H protein] + CO2. In terms of biological role, the glycine cleavage system catalyzes the degradation of glycine. The P protein binds the alpha-amino group of glycine through its pyridoxal phosphate cofactor; CO(2) is released and the remaining methylamine moiety is then transferred to the lipoamide cofactor of the H protein. The protein is Glycine dehydrogenase (decarboxylating) 1 (gcvP1) of Pseudomonas putida (strain ATCC 47054 / DSM 6125 / CFBP 8728 / NCIMB 11950 / KT2440).